The sequence spans 399 residues: S-adenosylmethionine synthase (399 aa).

His17 serves as a coordination point for ATP. Asp19 contacts Mg(2+). Glu45 contacts K(+). 2 residues coordinate L-methionine: Glu58 and Gln101. The flexible loop stretch occupies residues 101-111 (QSADIAMGVDQ). Residues 177-179 (DGK), 244-245 (RF), Asp253, 259-260 (RK), Ala276, and Lys280 each bind ATP. L-methionine is bound at residue Asp253. Position 284 (Lys284) interacts with L-methionine.

It belongs to the AdoMet synthase family. Homotetramer; dimer of dimers. Requires Mg(2+) as cofactor. The cofactor is K(+).

It localises to the cytoplasm. The enzyme catalyses L-methionine + ATP + H2O = S-adenosyl-L-methionine + phosphate + diphosphate. It functions in the pathway amino-acid biosynthesis; S-adenosyl-L-methionine biosynthesis; S-adenosyl-L-methionine from L-methionine: step 1/1. Its function is as follows. Catalyzes the formation of S-adenosylmethionine (AdoMet) from methionine and ATP. The overall synthetic reaction is composed of two sequential steps, AdoMet formation and the subsequent tripolyphosphate hydrolysis which occurs prior to release of AdoMet from the enzyme. The sequence is that of S-adenosylmethionine synthase from Bacillus cereus (strain G9842).